The following is a 123-amino-acid chain: NADH dehydrogenase [ubiquinone] 1 beta subcomplex subunit 7 (123 aa).

The interval 1-32 (MGTKLSVSLEGASTPETAPRVDRPPTFDPQYG) is disordered. Residues 59-102 (RDYCAHHLISLMKCQTQNAPFAGHACDGERGAWDKCEYDDHIMR) form the CHCH domain. 2 consecutive short sequence motifs (cx9C motif) follow at residues 62–72 (CAHHLISLMKC) and 84–94 (CDGERGAWDKC). Disulfide bonds link C62–C94 and C72–C84.

This sequence belongs to the complex I NDUFB7 subunit family. Complex I is composed of 45 different subunits.

Its subcellular location is the mitochondrion. The protein resides in the mitochondrion inner membrane. It localises to the mitochondrion intermembrane space. Functionally, accessory subunit of the mitochondrial membrane respiratory chain NADH dehydrogenase (Complex I), that is believed not to be involved in catalysis. Complex I functions in the transfer of electrons from NADH to the respiratory chain. The immediate electron acceptor for the enzyme is believed to be ubiquinone. This chain is NADH dehydrogenase [ubiquinone] 1 beta subcomplex subunit 7, found in Caenorhabditis elegans.